The following is a 394-amino-acid chain: 1-deoxy-D-xylulose 5-phosphate reductoisomerase (394 aa).

Threonine 13, glycine 14, threonine 15, isoleucine 16, and asparagine 125 together coordinate NADPH. Lysine 126 is a 1-deoxy-D-xylulose 5-phosphate binding site. Glutamate 127 contacts NADPH. Aspartate 151 contributes to the Mn(2+) binding site. Residues serine 152, glutamate 153, serine 182, and histidine 205 each coordinate 1-deoxy-D-xylulose 5-phosphate. Glutamate 153 is a Mn(2+) binding site. Glycine 211 contributes to the NADPH binding site. Positions 218, 223, 224, and 227 each coordinate 1-deoxy-D-xylulose 5-phosphate. Mn(2+) is bound at residue glutamate 227.

It belongs to the DXR family. Mg(2+) serves as cofactor. Mn(2+) is required as a cofactor.

The catalysed reaction is 2-C-methyl-D-erythritol 4-phosphate + NADP(+) = 1-deoxy-D-xylulose 5-phosphate + NADPH + H(+). Its pathway is isoprenoid biosynthesis; isopentenyl diphosphate biosynthesis via DXP pathway; isopentenyl diphosphate from 1-deoxy-D-xylulose 5-phosphate: step 1/6. Its function is as follows. Catalyzes the NADPH-dependent rearrangement and reduction of 1-deoxy-D-xylulose-5-phosphate (DXP) to 2-C-methyl-D-erythritol 4-phosphate (MEP). This Methylobacillus flagellatus (strain ATCC 51484 / DSM 6875 / VKM B-1610 / KT) protein is 1-deoxy-D-xylulose 5-phosphate reductoisomerase.